The sequence spans 230 residues: Ribonuclease 3 (230 aa).

An RNase III domain is found at 5–125 (YSRFYNILGY…VIGAIYLDSD (121 aa)). A Mg(2+)-binding site is contributed by E40. D44 is a catalytic residue. The Mg(2+) site is built by D111 and E114. E114 is an active-site residue. A DRBM domain is found at 153–223 (DSKSKLQEIL…AEKMIEMLSQ (71 aa)).

It belongs to the ribonuclease III family. As to quaternary structure, homodimer. Requires Mg(2+) as cofactor.

It localises to the cytoplasm. The catalysed reaction is Endonucleolytic cleavage to 5'-phosphomonoester.. Digests double-stranded RNA. Involved in the processing of primary rRNA transcript to yield the immediate precursors to the large and small rRNAs (23S and 16S). Also processes some mRNAs, and tRNAs when they are encoded in the rRNA operon. In terms of biological role, CRISPR (clustered regularly interspaced short palindromic repeat) is an adaptive immune system that provides protection against mobile genetic elements (viruses, transposable elements and conjugative plasmids). CRISPR clusters contain spacers, sequences complementary to antecedent mobile elements, and target invading nucleic acids. CRISPR clusters are transcribed and processed into CRISPR RNA (crRNA). In this organism endogenous ribonuclease 3 and Cas9 are required for correct coprocessing of pre-crRNA and the trans-encoded small RNA (tracrRNA). Cas9, crRNA and tracrRNA are required for cleavage of invading DNA. Complements pre-crRNA and tracrRNA coprocessing defects in an rnc deletion in S.pyogenes strain 370. This chain is Ribonuclease 3, found in Francisella tularensis subsp. novicida (strain U112).